A 711-amino-acid polypeptide reads, in one-letter code: C-Jun-amino-terminal kinase-interacting protein 1 (711 aa).

The tract at residues 1 to 27 (MAERESGGLGGGAASPPAASPFLGLHI) is disordered. The span at 14–25 (ASPPAASPFLGL) shows a compositional bias: low complexity. Phosphoserine occurs at positions 15, 29, and 40. The segment at 78–371 (AGGGGAGSRL…PPRASLSSDT (294 aa)) is disordered. Residue Thr103 is modified to Phosphothreonine; by MAPK8, MAPK9 and MAPK10. The span at 105-116 (GAEDDEEDDDEE) shows a compositional bias: acidic residues. The interval 127–285 (PKAESGQEPA…EATEEIYLTP (159 aa)) is JNK-binding domain (JBD). Residues 139-149 (GQGQSQGQSQG) show a composition bias toward low complexity. Position 152 is a phosphoserine (Ser152). The segment at 157-176 (RPKRPTTLNLFPQVPRSQDT) is minimal inhibitory domain (MID). Residues 162 to 182 (TTLNLFPQVPRSQDTLNNNSL) show a composition bias toward polar residues. A phosphoserine mark is found at Ser181, Ser187, Ser193, Ser195, and Ser196. The span at 194-204 (RSSSPLKTGEQ) shows a compositional bias: polar residues. At Thr205 the chain carries Phosphothreonine; by MAPK8, MAPK9 and MAPK10. A Phosphoserine modification is found at Ser214. Residues 228–244 (DRGTSTDSPCRRSTATQ) are compositionally biased toward polar residues. Over residues 267-277 (IHYQADVRLEA) the composition is skewed to basic and acidic residues. The interval 283-471 (LTPVQRPPDA…NVFMSGRSRS (189 aa)) is interaction with MAP3K7. Residues Ser311, Ser328, Ser330, Ser340, Ser355, Ser366, Ser369, Ser407, and Ser409 each carry the phosphoserine modification. Short sequence motifs (D-box) lie at residues 353-360 (RGSLGEPP) and 364-372 (RASLSSDTS). Position 411 is a phosphothreonine (Thr411). Residues 429–451 (EEYEEAPRPQPPACLSEDSTPDE) are disordered. A phosphoserine mark is found at Ser444 and Ser447. At Thr448 the chain carries Phosphothreonine. Phosphoserine occurs at positions 469, 471, 472, and 473. Positions 471–660 (SSSAESFGLF…PKNNKYFGFI (190 aa)) are interaction with VRK2. In terms of domain architecture, SH3 spans 488-549 (EQEQTHRAIF…PAYYAIEVTK (62 aa)). Residues 561–700 (SDWVDQFRVK…FQQFYKQFVE (140 aa)) form the PID domain.

Belongs to the JIP scaffold family. In terms of assembly, forms homo- or heterooligomeric complexes. Binds specific components of the JNK signaling pathway namely, MAPK8/JNK1, MAPK9/JNK2, MAPK10/JNK3, MAP2K7/MKK7, MAP3K11/MLK3 and DLK1. Also binds the proline-rich domain-containing splice variant of apolipoprotein E receptor 2 (ApoER2). Interacts, via the PID domain, with ARHGEF28. Binds the cytoplasmic tails of LRP1 and LRP2 (Megalin). Binds the TPR motif-containing C-terminal of KNS2, then the pre-assembled MAPK8IP1 scaffolding complexes are transported as a cargo of kinesin, to the required subcellular location. Interacts with the cytoplasmic domain of APP. Interacts with DCLK2. Interacts with MAP3K7/TAK1. Interacts with isoform 1 and isoform 2 of VRK2. Found in a complex with SH3RF1, RAC1, MAP3K11/MLK3, MAP2K7/MKK7 and MAPK8/JNK1. Found in a complex with SH3RF1, RAC2, MAP3K7/TAK1, MAP2K7/MKK7, MAPK8/JNK1 and MAPK9/JNK2. Interacts with SH3RF2. In terms of processing, phosphorylated by MAPK8, MAPK9 and MAPK10. Phosphorylation on Thr-103 is also necessary for the dissociation and activation of MAP3K12. Phosphorylated by isoform 1 and isoform 2 of VRK2. Hyperphosphorylated during mitosis following activation of stress-activated and MAP kinases. Post-translationally, ubiquitinated. Two preliminary events are required to prime for ubiquitination; phosphorylation and an increased in intracellular calcium concentration. Then, the calcium influx initiates ubiquitination and degradation by the ubiquitin-proteasome pathway. In terms of tissue distribution, highly expressed in brain. Expressed in neurons, localizing to neurite tips in differentiating cells. Also expressed in the pancreas, testis and prostate. Low levels in heart, ovary and small intestine. Decreased levels in pancreatic beta cells sensitize cells to IL-1-beta-induced apoptosis.

The protein localises to the cytoplasm. It is found in the perinuclear region. It localises to the nucleus. The protein resides in the endoplasmic reticulum membrane. Its subcellular location is the mitochondrion membrane. Its function is as follows. The JNK-interacting protein (JIP) group of scaffold proteins selectively mediates JNK signaling by aggregating specific components of the MAPK cascade to form a functional JNK signaling module. Required for JNK activation in response to excitotoxic stress. Cytoplasmic MAPK8IP1 causes inhibition of JNK-regulated activity by retaining JNK in the cytoplasm and inhibiting JNK phosphorylation of c-Jun. May also participate in ApoER2-specific reelin signaling. Directly, or indirectly, regulates GLUT2 gene expression and beta-cell function. Appears to have a role in cell signaling in mature and developing nerve terminals. May function as a regulator of vesicle transport, through interactions with the JNK-signaling components and motor proteins. Functions as an anti-apoptotic protein and whose level seems to influence the beta-cell death or survival response. Acts as a scaffold protein that coordinates with SH3RF1 in organizing different components of the JNK pathway, including RAC1 or RAC2, MAP3K11/MLK3 or MAP3K7/TAK1, MAP2K7/MKK7, MAPK8/JNK1 and/or MAPK9/JNK2 into a functional multiprotein complex to ensure the effective activation of the JNK signaling pathway. Regulates the activation of MAPK8/JNK1 and differentiation of CD8(+) T-cells. In Homo sapiens (Human), this protein is C-Jun-amino-terminal kinase-interacting protein 1 (MAPK8IP1).